Reading from the N-terminus, the 740-residue chain is ATP-dependent RNA helicase DBP7 (740 aa).

Residues 1 to 104 (MSFNDDDDGM…SNVEQPARVT (104 aa)) form a disordered region. Polar residues predominate over residues 13–25 (NFTTDVSDASETV). The span at 43-60 (MMMEGRKPRVRGEKRPLE) shows a compositional bias: basic and acidic residues. Residues 72–81 (ASSSNSTSAQ) show a composition bias toward polar residues. A Q motif motif is present at residues 149–178 (DTFDSFGITDTMVSHLNVKMKISKPTKIQK). The Helicase ATP-binding domain maps to 182 to 376 (PPFLQAQNDL…NVTLQNYKLI (195 aa)). An ATP-binding site is contributed by 195-202 (AQTGSGKT). A DEAD box motif is present at residues 311–314 (DEGD). The Helicase C-terminal domain maps to 414–607 (TITQKHYKEG…VLRPAFEGLN (194 aa)). Positions 695 to 721 (SMGLQQGKAGAAAAASQKKPKEDSKSK) are disordered. Over residues 697 to 711 (GLQQGKAGAAAAASQ) the composition is skewed to low complexity.

This sequence belongs to the DEAD box helicase family. DDX31/DBP7 subfamily.

It localises to the nucleus. It is found in the nucleolus. The enzyme catalyses ATP + H2O = ADP + phosphate + H(+). ATP-binding RNA helicase involved in the biogenesis of 60S ribosomal subunits and is required for the normal formation of 25S and 5.8S rRNAs. This is ATP-dependent RNA helicase DBP7 (DBP7) from Kluyveromyces lactis (strain ATCC 8585 / CBS 2359 / DSM 70799 / NBRC 1267 / NRRL Y-1140 / WM37) (Yeast).